We begin with the raw amino-acid sequence, 220 residues long: MCGGDVQGQGVASGCDEALERADSLRASDPVPVESGEGSVPGEHSQELETGASEETLRERVNVLQEQYLRKAADLENYRKRALRERQEAVEHAYAALLADIVAVLDDFDRAIEAADHASSTEVEASSAFREGVLMIRKQLSSVLETKYGLEYYPVLGERFDPNLHEALSMSPSASVHEKIVGAELQKGYRVRNRILRHAKVMVLTPEEQTEPDRGDGPSE.

Positions 1-55 are disordered; that stretch reads MCGGDVQGQGVASGCDEALERADSLRASDPVPVESGEGSVPGEHSQELETGASEE.

This sequence belongs to the GrpE family. Homodimer.

The protein resides in the cytoplasm. Participates actively in the response to hyperosmotic and heat shock by preventing the aggregation of stress-denatured proteins, in association with DnaK and GrpE. It is the nucleotide exchange factor for DnaK and may function as a thermosensor. Unfolded proteins bind initially to DnaJ; upon interaction with the DnaJ-bound protein, DnaK hydrolyzes its bound ATP, resulting in the formation of a stable complex. GrpE releases ADP from DnaK; ATP binding to DnaK triggers the release of the substrate protein, thus completing the reaction cycle. Several rounds of ATP-dependent interactions between DnaJ, DnaK and GrpE are required for fully efficient folding. This chain is Protein GrpE, found in Treponema pallidum (strain Nichols).